The following is a 361-amino-acid chain: Methyltransferase LUC1 (361 aa).

Positions 18, 66, 89, 126, and 127 each coordinate S-adenosyl-L-homocysteine. 2 residues coordinate Mg(2+): Q156 and F233.

This sequence belongs to the methyltransferase superfamily. Type-7 methyltransferase family. The cofactor is Mg(2+).

The protein operates within mycotoxin biosynthesis. In terms of biological role, methyltransferase; part of the gene cluster that mediates the biosynthesis of the mycotoxin lucilactaene and the lucilactaene-related compound NG-391 that act as cell cycle inhibitors with potent growth inhibitory activity against malarial parasites, moderate growth inhibitory activity against cancer cells, and no activity against bacteria and fungi. LUC1 performs the last step of the pathway and methylates the hydroxyl group of demethyllucilactaene at C-21 to yeald lucilactaene. The pathway begins with the hybrid PKS-NRPS synthetase LUC5 which is responsible for the condensation of one acetyl-coenzyme A (CoA) unit with six malonyl-CoA units and the amide linkage of the arising heptaketide and homoserine, subsequently releasing the first intermediate prelucilactaene B. Both the cytochrome P450 monooxygenase LUC2 and the hydrolase LUC6 function in parallel in modification of prelucilactaene B. LUC6 may catalyze the 2-pyrrolidone ring formation to form prelucilactaene C from prelucilactaene B, followed by C-15 hydroxylation by the same enzyme to give prelucilactaene D, which is then converted to prelucilactaene E by epoxidation, and finally to prelucilactaene F by cyclization. Prelucilactane D, prelucilactaene E, and prelucilactaene F can be converted to dihydrolucilactaene, NG391, and lucilactaene, respectively, via C-20 methyl group hydroxylation by the cytochrome P450 monooxygenase LUC2. However, LUC2, unlike FUS8 in fusarin C biosynthesis, is not enough for the full oxidation of the C-20 methyl group into carboxylic acid, which is a prerequisite for the final methylation step. The aldehyde dehydrogenase LUC3 is involved in the biosynthesis by further oxidation of the C-20 alcoholic analog prelucilactaene G into a carboxylic derivative. This unidentified carboxylic derivative may be converted to demethyllucilactaene. As the last step, the methyltransferase LUC1 methylates the hydroxyl group at C-21 of demethyllucilactaene to generate lucilactaene. This is Methyltransferase LUC1 from Fusarium sp.